The sequence spans 414 residues: MNQDLIAIGKRAQNAANKLALMNTATKNKALLQLADDLIKNKNQIIAANQQDLAAATQMPTKFTDRLMVNSQRIADMANGLRTIADLNDPTSQIDKGWITKDGLQILQRRVPLGVIGIIFEARPNVTVDATGLTFKSGNAVILRGGKEAIQTNTALVKILRESLQSQHLPVDAVQLITDTSHAIADEMMNLTDYIDVLIPRGGRALIQRVVTTATVPVIETGAGNCHIYIDKDADLTMATNITVNAKVQRPSVCNAAEKLLIHRDIAAKFLPVIAKALMEHGVQLRGDETACQLVSTIRPVTEEDWDTEYNDLIMAVKIVDSLDDAISHINHYSTHHSESIITNNITRGRYFQQAINSACVYVNASTRFTDGGEFGFGAEIGISTQKLHARGPMGLQQLTTIKYEITGNGQIRK.

The protein belongs to the gamma-glutamyl phosphate reductase family.

Its subcellular location is the cytoplasm. It catalyses the reaction L-glutamate 5-semialdehyde + phosphate + NADP(+) = L-glutamyl 5-phosphate + NADPH + H(+). Its pathway is amino-acid biosynthesis; L-proline biosynthesis; L-glutamate 5-semialdehyde from L-glutamate: step 2/2. In terms of biological role, catalyzes the NADPH-dependent reduction of L-glutamate 5-phosphate into L-glutamate 5-semialdehyde and phosphate. The product spontaneously undergoes cyclization to form 1-pyrroline-5-carboxylate. The chain is Gamma-glutamyl phosphate reductase from Limosilactobacillus reuteri (strain DSM 20016) (Lactobacillus reuteri).